The following is a 543-amino-acid chain: Polyadenylation factor subunit 2 (543 aa).

Residues 1 to 12 are compositionally biased toward low complexity; it reads MYRSHNNNNNYH. The interval 1–31 is disordered; the sequence is MYRSHNNNNNYHSRNDGSNGRINKPRDPKSQ. WD repeat units follow at residues 133–172, 175–215, 216–255, 258–297, 300–341, 344–384, and 414–453; these read KVKH…FETI, AHES…NNIS, AHAN…EERT, GHHW…CVST, GFKH…DMLV, DSET…PDSN, and AHEK…DPMA. A disordered region spans residues 486-543; sequence KNEDDEIANNDDPLSNSGRRRGVGASASGGATGSVPGLRSRNETPNNGSYAIPGLRGF.

It is found in the nucleus. Functionally, required for 3'-end cleavage and polyadenylation of pre-mRNAs. Also involved in chromosome segregation where it has a role in chromosome attachment to the mitotic spindle. In Candida albicans (strain SC5314 / ATCC MYA-2876) (Yeast), this protein is Polyadenylation factor subunit 2 (PFS2).